Reading from the N-terminus, the 228-residue chain is Urease accessory protein UreF (228 aa).

This sequence belongs to the UreF family. In terms of assembly, ureD, UreF and UreG form a complex that acts as a GTP-hydrolysis-dependent molecular chaperone, activating the urease apoprotein by helping to assemble the nickel containing metallocenter of UreC. The UreE protein probably delivers the nickel.

It is found in the cytoplasm. Required for maturation of urease via the functional incorporation of the urease nickel metallocenter. The protein is Urease accessory protein UreF of Blochmanniella pennsylvanica (strain BPEN).